The chain runs to 342 residues: Protein-glutamate methylesterase/protein-glutamine glutaminase 1 (342 aa).

The Response regulatory domain occupies 2–119 (RVAIVNDMPL…GDPKAAAQRL (118 aa)). The residue at position 53 (Asp53) is a 4-aspartylphosphate. The CheB-type methylesterase domain maps to 146–329 (SDTDAALVVI…LPLGDIAPRL (184 aa)). Active-site residues include Ser158, His185, and Asp278.

It belongs to the CheB family. Phosphorylated by CheA. Phosphorylation of the N-terminal regulatory domain activates the methylesterase activity.

Its subcellular location is the cytoplasm. The enzyme catalyses [protein]-L-glutamate 5-O-methyl ester + H2O = L-glutamyl-[protein] + methanol + H(+). It catalyses the reaction L-glutaminyl-[protein] + H2O = L-glutamyl-[protein] + NH4(+). Its function is as follows. Involved in chemotaxis. Part of a chemotaxis signal transduction system that modulates chemotaxis in response to various stimuli. Catalyzes the demethylation of specific methylglutamate residues introduced into the chemoreceptors (methyl-accepting chemotaxis proteins or MCP) by CheR. Also mediates the irreversible deamidation of specific glutamine residues to glutamic acid. The sequence is that of Protein-glutamate methylesterase/protein-glutamine glutaminase 1 from Bordetella avium (strain 197N).